The primary structure comprises 493 residues: Acetylcholine receptor subunit epsilon (493 aa).

Residues Met1 to Gly20 form the signal peptide. Residues Lys21 to Lys239 are Extracellular-facing. Residues Asn86 and Asn161 are each glycosylated (N-linked (GlcNAc...) asparagine). A disulfide bond links Cys148 and Cys162. Residues Pro240–Leu264 traverse the membrane as a helical segment. Residues Pro265–Lys272 lie on the Cytoplasmic side of the membrane. A helical membrane pass occupies residues Cys273–Ala291. The Extracellular segment spans residues Gln292 to Arg306. Residues Phe307 to Val328 form a helical membrane-spanning segment. The Cytoplasmic segment spans residues Ser329–Asn456. Residues Ile457–Asn480 form a helical membrane-spanning segment. At Arg481–Pro493 the chain is on the extracellular side.

The protein belongs to the ligand-gated ion channel (TC 1.A.9) family. Acetylcholine receptor (TC 1.A.9.1) subfamily. Epsilon/CHRNE sub-subfamily. Pentamer of two alpha chains, and one each of the beta, delta, and gamma (in immature muscle) or epsilon (in mature muscle) chains. The muscle heteropentamer composed of alpha-1, beta-1, delta, epsilon subunits interacts with the alpha-conotoxin ImII.

Its subcellular location is the postsynaptic cell membrane. The protein resides in the cell membrane. It catalyses the reaction K(+)(in) = K(+)(out). It carries out the reaction Na(+)(in) = Na(+)(out). In terms of biological role, after binding acetylcholine, the AChR responds by an extensive change in conformation that affects all subunits and leads to opening of an ion-conducting channel across the plasma membrane. The chain is Acetylcholine receptor subunit epsilon from Homo sapiens (Human).